Reading from the N-terminus, the 411-residue chain is Arginine deiminase (411 aa).

Cys-401 serves as the catalytic Amidino-cysteine intermediate.

This sequence belongs to the arginine deiminase family.

The protein localises to the cytoplasm. The enzyme catalyses L-arginine + H2O = L-citrulline + NH4(+). It functions in the pathway amino-acid degradation; L-arginine degradation via ADI pathway; carbamoyl phosphate from L-arginine: step 1/2. In Staphylococcus aureus (strain bovine RF122 / ET3-1), this protein is Arginine deiminase.